A 973-amino-acid polypeptide reads, in one-letter code: 109 kDa U5 small nuclear ribonucleoprotein component GFL (973 aa).

The disordered stretch occupies residues 1–40 (MDGSLYGECGNYIGPEIESDRDSDDSVEDEDLQEPGGSNG). Acidic residues predominate over residues 17–33 (IESDRDSDDSVEDEDLQ). The region spanning 122–408 (ALVRNVALVG…LGVTLSNSAY (287 aa)) is the tr-type G domain. The segment at 131-138 (GHLQHGKT) is G1. 131-138 (GHLQHGKT) lines the GTP pocket. Positions 175–179 (NISIK) are G2. Residues 201–204 (DTPG) form a G3 region. Residues 201-205 (DTPGN) and 255-258 (NKVD) each bind GTP. The segment at 255 to 258 (NKVD) is G4. Residues 381 to 383 (YSQ) are G5.

Belongs to the TRAFAC class translation factor GTPase superfamily. Classic translation factor GTPase family. In terms of tissue distribution, expressed in flower buds, open flowers and siliques. Expressed at low levels in rosettes leaves, cauline leaves and stems.

Its subcellular location is the nucleus speckle. In terms of biological role, splicing factor involved in pre-mRNA splicing and component of the spliceosome. The chain is 109 kDa U5 small nuclear ribonucleoprotein component GFL from Arabidopsis thaliana (Mouse-ear cress).